Here is a 573-residue protein sequence, read N- to C-terminus: 2-isopropylmalate synthase (573 aa).

The 278-residue stretch at 37 to 314 (PRWLSTDLRD…DPQIDFSNID (278 aa)) folds into the Pyruvate carboxyltransferase domain. Asp46, His253, His255, and Asn289 together coordinate Mg(2+). The interval 456-573 (NPRNPWGRIQ…VVSAVNRAAR (118 aa)) is regulatory domain.

The protein belongs to the alpha-IPM synthase/homocitrate synthase family. LeuA type 2 subfamily. In terms of assembly, homodimer. Requires Mg(2+) as cofactor.

The protein resides in the cytoplasm. The enzyme catalyses 3-methyl-2-oxobutanoate + acetyl-CoA + H2O = (2S)-2-isopropylmalate + CoA + H(+). It participates in amino-acid biosynthesis; L-leucine biosynthesis; L-leucine from 3-methyl-2-oxobutanoate: step 1/4. Functionally, catalyzes the condensation of the acetyl group of acetyl-CoA with 3-methyl-2-oxobutanoate (2-ketoisovalerate) to form 3-carboxy-3-hydroxy-4-methylpentanoate (2-isopropylmalate). The polypeptide is 2-isopropylmalate synthase (Streptomyces avermitilis (strain ATCC 31267 / DSM 46492 / JCM 5070 / NBRC 14893 / NCIMB 12804 / NRRL 8165 / MA-4680)).